Here is a 274-residue protein sequence, read N- to C-terminus: 3-methyl-2-oxobutanoate hydroxymethyltransferase (274 aa).

Mg(2+) contacts are provided by aspartate 50 and aspartate 89. Residues 50 to 51 (DS), aspartate 89, and lysine 119 contribute to the 3-methyl-2-oxobutanoate site. Glutamate 121 contacts Mg(2+). The Proton acceptor role is filled by glutamate 188.

The protein belongs to the PanB family. In terms of assembly, homodecamer; pentamer of dimers. Requires Mg(2+) as cofactor.

Its subcellular location is the cytoplasm. It catalyses the reaction 3-methyl-2-oxobutanoate + (6R)-5,10-methylene-5,6,7,8-tetrahydrofolate + H2O = 2-dehydropantoate + (6S)-5,6,7,8-tetrahydrofolate. Its pathway is cofactor biosynthesis; (R)-pantothenate biosynthesis; (R)-pantoate from 3-methyl-2-oxobutanoate: step 1/2. In terms of biological role, catalyzes the reversible reaction in which hydroxymethyl group from 5,10-methylenetetrahydrofolate is transferred onto alpha-ketoisovalerate to form ketopantoate. The sequence is that of 3-methyl-2-oxobutanoate hydroxymethyltransferase from Methylorubrum populi (strain ATCC BAA-705 / NCIMB 13946 / BJ001) (Methylobacterium populi).